We begin with the raw amino-acid sequence, 412 residues long: Nucleoside transporter 1 (412 aa).

Residues 1–21 are disordered; that stretch reads MSKIKESSSGILGASNNTNKE. The Cytoplasmic portion of the chain corresponds to 1–29; that stretch reads MSKIKESSSGILGASNNTNKESSQKSARS. Polar residues predominate over residues 7–21; it reads SSSGILGASNNTNKE. A helical membrane pass occupies residues 30-50; the sequence is IALPMTYALIGVSCLNVWNSA. The Extracellular segment spans residues 51 to 56; sequence LGLNIK. Residues 57-77 form a helical membrane-spanning segment; it reads ITYNIFQMAGLLTSSVLALFV. The Cytoplasmic segment spans residues 78–81; that stretch reads NYPR. Residues 82-102 traverse the membrane as a helical segment; the sequence is VLLPTSLGVLTLLCAGFQIAH. At 103–114 the chain is on the extracellular side; sequence QTFSDSAFDTYC. A helical membrane pass occupies residues 115 to 135; it reads LAAFITIGLMAGIAQTIAFAI. Residues 136 to 144 lie on the Cytoplasmic side of the membrane; it reads GTTKESNMS. Residues 145 to 165 traverse the membrane as a helical segment; sequence GYISAGIGMSGVLIFCINLIL. Residues 166-181 lie on the Extracellular side of the membrane; sequence DYIVSDEKIYEINKSK. The helical transmembrane segment at 182–202 threads the bilayer; sequence LLCLFSISEIFLIITIVCCVL. Over 203 to 240 the chain is Cytoplasmic; that stretch reads YIDLFPKNDNNKDSTDIEKAEEKEGRLPLIEIIKDGYK. The helical transmembrane segment at 241 to 261 threads the bilayer; the sequence is AILSIFLVNWLSLQLFPGIGH. Residues 262–271 are Extracellular-facing; that stretch reads KKWQEKHGMT. Residues 272–294 form a helical membrane-spanning segment; that stretch reads DNNVTIIVGMFQVFDFISRYPPN. At 295–310 the chain is on the cytoplasmic side; it reads FTHIKIFKYFTFSLNT. Residues 311 to 331 form a helical membrane-spanning segment; it reads LLIGNFLRLLFIPWFVLNAVI. The Extracellular segment spans residues 332-343; that stretch reads SSSFFTNIVQQC. A helical membrane pass occupies residues 344–364; the sequence is VCIAALAFTNGWFNTVPFIVF. Residues 365–382 are Cytoplasmic-facing; that stretch reads VKELKKVKHQKDIETISR. The chain crosses the membrane as a helical span at residues 383–403; the sequence is IMVVSLFFGLFFGMLTTCLYD. At 404–412 the chain is on the extracellular side; sequence YFPIGILNN.

It belongs to the SLC29A/ENT transporter (TC 2.A.57) family.

The protein resides in the cell membrane. It catalyses the reaction inosine(in) = inosine(out). It carries out the reaction adenosine(in) = adenosine(out). The catalysed reaction is hypoxanthine(out) = hypoxanthine(in). The enzyme catalyses guanosine(in) = guanosine(out). It catalyses the reaction guanine(out) = guanine(in). It carries out the reaction thymidine(in) = thymidine(out). The catalysed reaction is uridine(out) = uridine(in). The enzyme catalyses uracil(in) = uracil(out). It catalyses the reaction thymine(out) = thymine(in). It carries out the reaction adenine(out) = adenine(in). The catalysed reaction is cytosine(out) = cytosine(in). The enzyme catalyses xanthine(out) = xanthine(in). In terms of biological role, nucleoside and nucleobase transporter with a broad substrate specificity. This is Nucleoside transporter 1 from Plasmodium berghei (strain Anka).